A 1209-amino-acid chain; its full sequence is MANGGGGGGGGSSGSSGGGGGGGGGETALRMSSNIHANHLSLDASSSSSSSSSSSSSSSSSVHEPKMDALIIPVTMEVPCDSRGQRMWWAFLASSMVTFFGGLFIILLWRTLKYLWTVCCHCGGKTKEAQKINNGSSQADGTLKPVDEKEEVVAAEVGWMTSVKDWAGVMISAQTLTGRVLVVLVFALSIGALVIYFIDSSNPIESCQNFYKDFTLQIDMAFNVFFLLYFGLRFIAANDKLWFWLEVNSVVDFFTVPPVFVSVYLNRSWLGLRFLRALRLIQFSEILQFLNILKTSNSIKLVNLLSIFISTWLTAAGFIHLVENSGDPWENFQNNQALTYWECVYLLMVTMSTVGYGDVYAKTTLGRLFMVFFILGGLAMFASYVPEIIELIGNRKKYGGSYSAVSGRKHIVVCGHITLESVSNFLKDFLHKDRDDVNVEIVFLHNISPNLELEALFKRHFTQVEFYQGSVLNPHDLARVKIESADACLILANKYCADPDAEDASNIMRVISIKNYHPKIRIITQMLQYHNKAHLLNIPSWNWKEGDDAICLAELKLGFIAQSCLAQGLSTMLANLFSMRSFIKIEEDTWQKYYLEGVSNEMYTEYLSSAFVGLSFPTVCELCFVKLKLLMIAIEYKSANRESRSRKRILINPGNHLKIQEGTLGFFIASDAKEVKRAFFYCKACHDDVTDPKRIKKCGCRRLEDEQPPTLSPKKKQRNGGMRNSPNTSPKLMRHDPLLIPGNDQIDNMDSNVKKYDSTGMFHWCAPKEIEKVILTRSEAAMTVLSGHVVVCIFGDVSSALIGLRNLVMPLRASNFHYHELKHIVFVGSIEYLKREWETLHNFPKVSILPGTPLSRADLRAVNINLCDMCVILSANQNNIDDTSLQDKECILASLNIKSMQFDDSIGVLQANSQGFTPPGMDRSSPDNSPVHGMLRQPSITTGVNIPIITELAKPGKLPLVSVNQEKNSGTHILMITELVNDTNVQFLDQDDDDDPDTELYLTQPFACGTAFAVSVLDSLMSATYFNDNILTLIRTLVTGGATPELEALIAEENALRGGYSTPQTLANRDRCRVAQLALLDGPFADLGDGGCYGDLFCKALKTYNMLCFGIYRLRDAHLSTPSQCTKRYVITNPPYEFELVPTDLIFCLMQFDHNAGQSRASLSHSSHSSQSSSKKSSSVHSIPSTANRPNRPKSRESRDKQKKEMVYR.

Positions 1-26 are enriched in gly residues; that stretch reads MANGGGGGGGGSSGSSGGGGGGGGGE. Disordered stretches follow at residues 1-29 and 42-64; these read MANG…ETAL and LDAS…SVHE. Over 1 to 87 the chain is Extracellular; it reads MANGGGGGGG…VPCDSRGQRM (87 aa). Residues 45-61 are compositionally biased toward low complexity; sequence SSSSSSSSSSSSSSSSS. The chain crosses the membrane as a helical span at residues 88 to 108; that stretch reads WWAFLASSMVTFFGGLFIILL. The Cytoplasmic segment spans residues 109–179; that stretch reads WRTLKYLWTV…MISAQTLTGR (71 aa). 3 S-palmitoyl cysteine lipidation sites follow: Cys-119, Cys-120, and Cys-122. The chain crosses the membrane as a helical span at residues 180-200; sequence VLVVLVFALSIGALVIYFIDS. At 201–215 the chain is on the extracellular side; it reads SNPIESCQNFYKDFT. A helical transmembrane segment spans residues 216–236; it reads LQIDMAFNVFFLLYFGLRFIA. Residues 237-240 are Cytoplasmic-facing; sequence ANDK. A helical transmembrane segment spans residues 241–261; it reads LWFWLEVNSVVDFFTVPPVFV. At 262–265 the chain is on the extracellular side; it reads SVYL. Residues 266-286 traverse the membrane as a helical; Voltage-sensor segment; that stretch reads NRSWLGLRFLRALRLIQFSEI. Residues 287–301 lie on the Cytoplasmic side of the membrane; sequence LQFLNILKTSNSIKL. A helical transmembrane segment spans residues 302-322; it reads VNLLSIFISTWLTAAGFIHLV. The Extracellular segment spans residues 323 to 336; that stretch reads ENSGDPWENFQNNQ. The pore-forming intramembrane region spans 337–359; it reads ALTYWECVYLLMVTMSTVGYGDV. Residues 353–356 carry the Selectivity for potassium motif; it reads TVGY. At 360–368 the chain is on the extracellular side; that stretch reads YAKTTLGRL. The chain crosses the membrane as a helical span at residues 369 to 389; it reads FMVFFILGGLAMFASYVPEII. Topologically, residues 390–1209 are cytoplasmic; the sequence is ELIGNRKKYG…DKQKKEMVYR (820 aa). The 143-residue stretch at 408–550 folds into the RCK N-terminal 1 domain; that stretch reads RKHIVVCGHI…WNWKEGDDAI (143 aa). Glu-440, Gln-463, and Glu-465 together coordinate Mg(2+). Residues 557 to 577 are segment S7; it reads LGFIAQSCLAQGLSTMLANLF. The segment S8 stretch occupies residues 614-634; that stretch reads LSFPTVCELCFVKLKLLMIAI. A heme-binding motif region spans residues 682-686; that stretch reads CKACH. A disordered region spans residues 704–734; it reads EDEQPPTLSPKKKQRNGGMRNSPNTSPKLMR. Thr-710 carries the phosphothreonine modification. 3 positions are modified to phosphoserine: Ser-712, Ser-725, and Ser-729. The tract at residues 784–804 is segment S9; it reads VLSGHVVVCIFGDVSSALIGL. One can recognise an RCK N-terminal 2 domain in the interval 786–930; sequence SGHVVVCIFG…MDRSSPDNSP (145 aa). At Thr-917 the chain carries Phosphothreonine. Residues Ser-925 and Ser-929 each carry the phosphoserine modification. Residues 977–999 carry the Calcium bowl motif; sequence TELVNDTNVQFLDQDDDDDPDTE. Ca(2+)-binding residues include Gln-986, Asp-989, Asp-992, and Asp-994. The interval 1006 to 1026 is segment S10; that stretch reads FACGTAFAVSVLDSLMSATYF. Over residues 1160–1185 the composition is skewed to low complexity; that stretch reads RASLSHSSHSSQSSSKKSSSVHSIPS. Residues 1160–1209 form a disordered region; that stretch reads RASLSHSSHSSQSSSKKSSSVHSIPSTANRPNRPKSRESRDKQKKEMVYR. Basic and acidic residues predominate over residues 1194–1209; sequence KSRESRDKQKKEMVYR. Phosphoserine occurs at positions 1195 and 1198.

The protein belongs to the potassium channel family. Calcium-activated (TC 1.A.1.3) subfamily. KCa1.1/KCNMA1 sub-subfamily. In terms of assembly, homotetramer; which constitutes the calcium-activated potassium channel. Interacts with beta subunits KCNMB1, KCNMB2, KCNMB3 and KCNMB4. Interacts with gamma subunits LRRC26, LRRC38, LRRC52 and LRRC55. Beta and gamma subunits are accessory, and modulate its activity. Interacts with RAB11B. In terms of processing, phosphorylated. Phosphorylation by kinases such as PKA and/or PKG. In smooth muscles, phosphorylation affects its activity. Post-translationally, palmitoylation by ZDHHC22 and ZDHHC23 within the intracellular linker between the S0 and S1 transmembrane domains regulates localization to the plasma membrane. Depalmitoylated by LYPLA1 and LYPLAL1, leading to retard exit from the trans-Golgi network.

Its subcellular location is the cell membrane. It localises to the endoplasmic reticulum membrane. The catalysed reaction is K(+)(in) = K(+)(out). With respect to regulation, ethanol and carbon monoxide-bound heme increase channel activation. Its activity is regulated as follows. Heme inhibits channel activation. Potassium channel activated by both membrane depolarization or increase in cytosolic Ca(2+) that mediates export of K(+). It is also activated by the concentration of cytosolic Mg(2+). Its activation dampens the excitatory events that elevate the cytosolic Ca(2+) concentration and/or depolarize the cell membrane. It therefore contributes to repolarization of the membrane potential. Plays a key role in controlling excitability in a number of systems, such as regulation of the contraction of smooth muscle, the tuning of hair cells in the cochlea, regulation of transmitter release, and innate immunity. In smooth muscles, its activation by high level of Ca(2+), caused by ryanodine receptors in the sarcoplasmic reticulum, regulates the membrane potential. In cochlea cells, its number and kinetic properties partly determine the characteristic frequency of each hair cell and thereby helps to establish a tonotopic map. Kinetics of KCNMA1 channels are determined by alternative splicing, phosphorylation status and its combination with modulating beta subunits. Highly sensitive to both iberiotoxin (IbTx) and charybdotoxin (CTX). Its function is as follows. Potassium channel activated by both membrane depolarization or increase in cytosolic Ca(2+) that mediates export of K(+). The sequence is that of Calcium-activated potassium channel subunit alpha-1 (Kcnma1) from Rattus norvegicus (Rat).